An 824-amino-acid chain; its full sequence is Disintegrin and metalloproteinase domain-containing protein 17 (824 aa).

A signal peptide spans 1-17 (MRQSLLFLTSVVPFVLA). Positions 18–214 (PRPPDDPGFG…PEELVHRVKR (197 aa)) are excised as a propeptide. Residues Asn103, Asn157, and Asn174 are each glycosylated (N-linked (GlcNAc...) asparagine). The Cysteine switch signature appears at 182–189 (KVCGYLKV). Residue Cys184 coordinates Zn(2+). Over 215–671 (RADPDPMKNT…NTFGKFLADN (457 aa)) the chain is Extracellular. A Peptidase M12B domain is found at 223–474 (NTCKLLVVAD…KAQECFQERS (252 aa)). 3 disulfide bridges follow: Cys225–Cys333, Cys365–Cys469, and Cys423–Cys453. Asn264 carries N-linked (GlcNAc...) asparagine glycosylation. A Zn(2+)-binding site is contributed by His405. Glu406 is an active-site residue. Zn(2+) contacts are provided by His409 and His415. Residues Asn452, Asn498, Asn539, and Asn551 are each glycosylated (N-linked (GlcNAc...) asparagine). Positions 475–563 (NKVCGNSRVD…ECPPPGNAED (89 aa)) constitute a Disintegrin domain. Disulfide bonds link Cys534–Cys555, Cys573–Cys582, Cys578–Cys591, and Cys593–Cys600. A glycan (N-linked (GlcNAc...) asparagine) is linked at Asn594. Positions 603–671 (CCRDLSGRCV…NTFGKFLADN (69 aa)) are crambin-like. The chain crosses the membrane as a helical span at residues 672-692 (IVGSVLVFSLIFWIPFSILVH). At 693–824 (CVDKKLDKQY…NRVDSKETEC (132 aa)) the chain is on the cytoplasmic side. 2 short sequence motifs (SH3-binding) span residues 731–738 (PAPQTPGR) and 741–748 (PAPVIPSA). The disordered stretch occupies residues 732 to 824 (APQTPGRLQP…NRVDSKETEC (93 aa)). Phosphothreonine; by MAPK14 is present on Thr735. Over residues 741–752 (PAPVIPSAPAAP) the composition is skewed to low complexity. The residue at position 761 (Thr761) is a Phosphothreonine. Ser767 is subject to Phosphoserine. Basic and acidic residues-rich tracts occupy residues 768–781 (TDSH…EKDP), 791–807 (SFED…EKAA), and 815–824 (NRVDSKETEC). A phosphoserine mark is found at Ser791 and Ser819.

Interacts with MAD2L1, MAPK14 and MUC1. Interacts with iRhom1/RHBDF1 and iRhom2/RHBDF2. Interacts with FRMD8 via its interaction with iRhom1/RHBDF1 and iRhom2/RHBDF2. Interacts with TSPAN8. It depends on Zn(2+) as a cofactor. Post-translationally, the precursor is cleaved by a furin endopeptidase. Phosphorylated. Stimulation by growth factor or phorbol 12-myristate 13-acetate induces phosphorylation of Ser-819 but decreases phosphorylation of Ser-791. Phosphorylation at Thr-735 by MAPK14 is required for ADAM17-mediated ectodomain shedding. In terms of tissue distribution, ubiquitously expressed. Expressed at highest levels in adult heart, placenta, skeletal muscle, pancreas, spleen, thymus, prostate, testes, ovary and small intestine, and in fetal brain, lung, liver and kidney. Expressed in natural killer cells (at protein level).

The protein localises to the cell membrane. The catalysed reaction is Narrow endopeptidase specificity. Cleaves Pro-Leu-Ala-Gln-Ala-|-Val-Arg-Ser-Ser-Ser in the membrane-bound, 26-kDa form of tumor necrosis factor alpha (TNFalpha). Similarly cleaves other membrane-anchored, cell-surface proteins to 'shed' the extracellular domains.. Its function is as follows. Transmembrane metalloprotease which mediates the ectodomain shedding of a myriad of transmembrane proteins including adhesion proteins, growth factor precursors and cytokines important for inflammation and immunity. Cleaves the membrane-bound precursor of TNF-alpha to its mature soluble form. Responsible for the proteolytical release of soluble JAM3 from endothelial cells surface. Responsible for the proteolytic release of several other cell-surface proteins, including p75 TNF-receptor, interleukin 1 receptor type II, p55 TNF-receptor, transforming growth factor-alpha, L-selectin, growth hormone receptor, MUC1 and the amyloid precursor protein. Acts as an activator of Notch pathway by mediating cleavage of Notch, generating the membrane-associated intermediate fragment called Notch extracellular truncation (NEXT). Plays a role in the proteolytic processing of ACE2. Plays a role in hemostasis through shedding of GP1BA, the platelet glycoprotein Ib alpha chain. Mediates the proteolytic cleavage of LAG3, leading to release the secreted form of LAG3. Mediates the proteolytic cleavage of IL6R, leading to the release of secreted form of IL6R. Mediates the proteolytic cleavage and shedding of FCGR3A upon NK cell stimulation, a mechanism that allows for increased NK cell motility and detachment from opsonized target cells. Cleaves TREM2, resulting in shedding of the TREM2 ectodomain. This is Disintegrin and metalloproteinase domain-containing protein 17 from Homo sapiens (Human).